The chain runs to 75 residues: UPF0512 protein C (75 aa).

This sequence belongs to the UPF0512 family.

This is UPF0512 protein C from Dictyostelium discoideum (Social amoeba).